Here is a 167-residue protein sequence, read N- to C-terminus: Keratin-associated protein 1-3 (167 aa).

This sequence belongs to the KRTAP type 1 family. As to quaternary structure, interacts with hair keratins. In terms of tissue distribution, expressed in the middle/upper portions of the hair cortex, in the region termed the keratogenous zone.

Functionally, in the hair cortex, hair keratin intermediate filaments are embedded in an interfilamentous matrix, consisting of hair keratin-associated proteins (KRTAP), which are essential for the formation of a rigid and resistant hair shaft through their extensive disulfide bond cross-linking with abundant cysteine residues of hair keratins. The matrix proteins include the high-sulfur and high-glycine-tyrosine keratins. In Homo sapiens (Human), this protein is Keratin-associated protein 1-3 (KRTAP1-3).